A 333-amino-acid polypeptide reads, in one-letter code: NADH-quinone oxidoreductase subunit H (333 aa).

8 consecutive transmembrane segments (helical) span residues 15–35, 88–108, 117–137, 159–179, 191–211, 239–259, 274–296, and 313–333; these read FFIF…FVTY, FILA…VIPF, IGVG…GVVT, ISYE…AGSL, VWYI…AVAE, WAFF…LITV, IPGA…WFRV, and VLLP…ELFF.

It belongs to the complex I subunit 1 family. As to quaternary structure, NDH-1 is composed of 14 different subunits. Subunits NuoA, H, J, K, L, M, N constitute the membrane sector of the complex.

It localises to the cell membrane. It catalyses the reaction a quinone + NADH + 5 H(+)(in) = a quinol + NAD(+) + 4 H(+)(out). Its function is as follows. NDH-1 shuttles electrons from NADH, via FMN and iron-sulfur (Fe-S) centers, to quinones in the respiratory chain. The immediate electron acceptor for the enzyme in this species is believed to be ubiquinone. Couples the redox reaction to proton translocation (for every two electrons transferred, four hydrogen ions are translocated across the cytoplasmic membrane), and thus conserves the redox energy in a proton gradient. This subunit may bind ubiquinone. The polypeptide is NADH-quinone oxidoreductase subunit H (Bacillus thuringiensis subsp. konkukian (strain 97-27)).